Consider the following 158-residue polypeptide: Transcription factor HY5 (158 aa).

A compositionally biased stretch (low complexity) spans 1–25; it reads MQEQATSSIAASSLPSSSERSSSSA. The interval 1-105 is disordered; that stretch reads MQEQATSSIA…NRVSAQQARE (105 aa). Positions 26–44 are enriched in basic and acidic residues; that stretch reads LHHELKEGMESDDEIRRVP. The interaction with COP1 stretch occupies residues 35–46; the sequence is ESDDEIRRVPEM. Positions 47-58 are enriched in low complexity; sequence GGEATGTTSASG. The region spanning 86–149 is the bZIP domain; sequence ENKRLKRLLR…QMLRHILKNT (64 aa). A basic motif region spans residues 88–108; the sequence is KRLKRLLRNRVSAQQARERKK. Positions 114 to 142 are leucine-zipper; the sequence is LEARVKELETKNAELEERLSTLQNENQML.

Belongs to the bZIP family. As to quaternary structure, interacts with COP1. In terms of processing, ubiquitinated by COP1. Ubiquitination takes place in darkness and leads to its subsequent degradation, thereby preventing to activate photomorphogenesis signals.

The protein localises to the nucleus. Transcription factor that promotes photomorphogenesis in the light and positively regulates fruit pigmentation and fruit nutritional quality. Probably acts downstream of the light receptor network and directly affects transcription of light-induced genes. The chain is Transcription factor HY5 (HY5) from Solanum lycopersicum (Tomato).